The sequence spans 220 residues: Peptide methionine sulfoxide reductase MsrA (220 aa).

Cys59 is a catalytic residue.

The protein belongs to the MsrA Met sulfoxide reductase family.

It carries out the reaction L-methionyl-[protein] + [thioredoxin]-disulfide + H2O = L-methionyl-(S)-S-oxide-[protein] + [thioredoxin]-dithiol. It catalyses the reaction [thioredoxin]-disulfide + L-methionine + H2O = L-methionine (S)-S-oxide + [thioredoxin]-dithiol. In terms of biological role, has an important function as a repair enzyme for proteins that have been inactivated by oxidation. Catalyzes the reversible oxidation-reduction of methionine sulfoxide in proteins to methionine. In Corynebacterium kroppenstedtii (strain DSM 44385 / JCM 11950 / CIP 105744 / CCUG 35717), this protein is Peptide methionine sulfoxide reductase MsrA.